Consider the following 471-residue polypeptide: 5-hydroxytryptamine receptor 2A (471 aa).

Residues 1–80 lie on the Extracellular side of the membrane; that stretch reads MDILCEENTS…LQEKNWSALL (80 aa). 5 N-linked (GlcNAc...) asparagine glycosylation sites follow: Asn8, Asn38, Asn44, Asn51, and Asn54. A helical membrane pass occupies residues 81–97; the sequence is TAVVIILTIAGNILVIM. Topologically, residues 98–111 are cytoplasmic; the sequence is AVSLEKKLQNATNY. Residues 112–137 traverse the membrane as a helical segment; sequence FLMSLAIADMLLGFLVMPVSMLTILY. Residues 138 to 146 lie on the Extracellular side of the membrane; that stretch reads GYRWPLPSK. Residues 147–171 traverse the membrane as a helical segment; the sequence is LCAVWIYLDVLFSTASIMHLCAISL. Cys148 and Cys227 are joined by a disulfide. Asp155 serves as a coordination point for serotonin. The short motif at 172 to 174 is the DRY motif; important for ligand-induced conformation changes element; that stretch reads DRY. The Cytoplasmic portion of the chain corresponds to 172–191; sequence DRYVAIQNPIHHSRFNSRTK. A helical transmembrane segment spans residues 192-215; that stretch reads AFLKIIAVWTISVGISMPIPVFGL. Over 216–232 the chain is Extracellular; sequence QDDSKVFKEGSCLLADD. Residues 233 to 258 form a helical membrane-spanning segment; that stretch reads NFVLIGSFVSFFIPLTIMVITYFLTI. Residues 259-322 are Cytoplasmic-facing; sequence KSLQKEATLC…QSISNEQKAC (64 aa). Ser280 bears the Phosphoserine mark. The chain crosses the membrane as a helical span at residues 323–348; it reads KVLGIVFFLFVVMWCPFFITNIMAVI. Asn343 is a serotonin binding site. The cysteines at positions 349 and 353 are disulfide-linked. Residues 349–356 lie on the Extracellular side of the membrane; the sequence is CKESCNED. A helical transmembrane segment spans residues 357 to 382; that stretch reads VIGALLNVFVWIGYLSSAVNPLVYTL. Positions 376–380 match the NPxxY motif; important for ligand-induced conformation changes and signaling motif; that stretch reads NPLVY. Residues 383 to 471 lie on the Cytoplasmic side of the membrane; the sequence is FNKTYRSAFS…DGVNEKVSCV (89 aa). A disordered region spans residues 450–471; that stretch reads KQHSEDASKDNSDGVNEKVSCV. The segment covering 451-465 has biased composition (basic and acidic residues); it reads QHSEDASKDNSDGVN. The PDZ-binding motif lies at 469-471; it reads SCV.

This sequence belongs to the G-protein coupled receptor 1 family. In terms of assembly, interacts (via C-terminus) with MPDZ and PATJ. May interact (via C-terminus) with MPP3, PRDX6, DLG4, DLG1, CASK, APBA1 and MAGI2. Interacts with GRM2 and DRD2; this may affect signaling.

It is found in the cell membrane. It localises to the cell projection. The protein localises to the dendrite. The protein resides in the axon. Its subcellular location is the cytoplasmic vesicle. It is found in the membrane. It localises to the caveola. The protein localises to the presynapse. Its activity is regulated as follows. G-protein coupled receptor activity is regulated by lipids: oleamide increases HTR2A-mediated activity. In terms of biological role, G-protein coupled receptor for 5-hydroxytryptamine (serotonin). Also functions as a receptor for various drugs and psychoactive substances, including mescaline, psilocybin, 1-(2,5-dimethoxy-4-iodophenyl)-2-aminopropane (DOI) and lysergic acid diethylamide (LSD). Ligand binding causes a conformation change that triggers signaling via guanine nucleotide-binding proteins (G proteins) and modulates the activity of downstream effectors. HTR2A is coupled to G(q)/G(11) G alpha proteins and activates phospholipase C-beta, releasing diacylglycerol (DAG) and inositol 1,4,5-trisphosphate (IP3) second messengers that modulate the activity of phosphatidylinositol 3-kinase and promote the release of Ca(2+) ions from intracellular stores, respectively. Beta-arrestin family members inhibit signaling via G proteins and mediate activation of alternative signaling pathways. Affects neural activity, perception, cognition and mood. Plays a role in the regulation of behavior, including responses to anxiogenic situations and psychoactive substances. Plays a role in intestinal smooth muscle contraction, and may play a role in arterial vasoconstriction. The protein is 5-hydroxytryptamine receptor 2A (HTR2A) of Macaca mulatta (Rhesus macaque).